We begin with the raw amino-acid sequence, 194 residues long: Fe/S biogenesis protein NfuA (194 aa).

[4Fe-4S] cluster-binding residues include Cys-151 and Cys-154.

This sequence belongs to the NfuA family. In terms of assembly, homodimer. The cofactor is [4Fe-4S] cluster.

Its function is as follows. Involved in iron-sulfur cluster biogenesis. Binds a 4Fe-4S cluster, can transfer this cluster to apoproteins, and thereby intervenes in the maturation of Fe/S proteins. Could also act as a scaffold/chaperone for damaged Fe/S proteins. The sequence is that of Fe/S biogenesis protein NfuA from Aliivibrio fischeri (strain ATCC 700601 / ES114) (Vibrio fischeri).